A 141-amino-acid polypeptide reads, in one-letter code: uncharacterized protein (141 aa).

Residues 1-39 are compositionally biased toward low complexity; it reads MNNNNNNNNNNNNNNNNNNNNNNNNNSYDSNHSSSSYTS. The disordered stretch occupies residues 1 to 48; the sequence is MNNNNNNNNNNNNNNNNNNNNNNNNNSYDSNHSSSSYTSENQNREQQF. The chain crosses the membrane as a helical span at residues 109–129; it reads FFCKIILVFICLVAIYSLVVI.

The protein localises to the membrane. This is an uncharacterized protein from Dictyostelium discoideum (Social amoeba).